Reading from the N-terminus, the 251-residue chain is ATP synthase subunit a (251 aa).

5 helical membrane passes run 14-34, 78-98, 107-127, 174-194, and 196-216; these read GFVK…LLAV, YLPF…FAVF, SLST…FYGI, MILA…MGVL, and LLIG…YIAA. Positions 224–251 are disordered; sequence NAGASDDEGGEDAKSACAAGGKICKHKP.

This sequence belongs to the ATPase A chain family. In terms of assembly, F-type ATPases have 2 components, CF(1) - the catalytic core - and CF(0) - the membrane proton channel. CF(1) has five subunits: alpha(3), beta(3), gamma(1), delta(1), epsilon(1). CF(0) has three main subunits: a(1), b(2) and c(9-12). The alpha and beta chains form an alternating ring which encloses part of the gamma chain. CF(1) is attached to CF(0) by a central stalk formed by the gamma and epsilon chains, while a peripheral stalk is formed by the delta and b chains.

Its subcellular location is the cell inner membrane. Functionally, key component of the proton channel; it plays a direct role in the translocation of protons across the membrane. In Nitrosospira multiformis (strain ATCC 25196 / NCIMB 11849 / C 71), this protein is ATP synthase subunit a.